The primary structure comprises 66 residues: Large ribosomal subunit protein bL33 (66 aa).

The protein belongs to the bacterial ribosomal protein bL33 family.

This chain is Large ribosomal subunit protein bL33, found in Synechococcus sp. (strain CC9902).